A 208-amino-acid chain; its full sequence is Thymidylate kinase (208 aa).

An ATP-binding site is contributed by 10–17 (GGEGVGKS).

Belongs to the thymidylate kinase family.

The catalysed reaction is dTMP + ATP = dTDP + ADP. Its function is as follows. Phosphorylation of dTMP to form dTDP in both de novo and salvage pathways of dTTP synthesis. The protein is Thymidylate kinase of Rhizorhabdus wittichii (strain DSM 6014 / CCUG 31198 / JCM 15750 / NBRC 105917 / EY 4224 / RW1) (Sphingomonas wittichii).